The following is a 290-amino-acid chain: ATP synthase gamma chain (290 aa).

It belongs to the ATPase gamma chain family. As to quaternary structure, F-type ATPases have 2 components, CF(1) - the catalytic core - and CF(0) - the membrane proton channel. CF(1) has five subunits: alpha(3), beta(3), gamma(1), delta(1), epsilon(1). CF(0) has three main subunits: a, b and c.

It localises to the cell inner membrane. In terms of biological role, produces ATP from ADP in the presence of a proton gradient across the membrane. The gamma chain is believed to be important in regulating ATPase activity and the flow of protons through the CF(0) complex. In Chelativorans sp. (strain BNC1), this protein is ATP synthase gamma chain.